Reading from the N-terminus, the 222-residue chain is Octanoyltransferase (222 aa).

The region spanning 34–214 is the BPL/LPL catalytic domain; the sequence is GEAPSTVLLL…EFRKHEEALV (181 aa). Substrate-binding positions include 72 to 79, 144 to 146, and 157 to 159; these read RGGKLTWH, AIG, and GVA. Cys175 acts as the Acyl-thioester intermediate in catalysis.

This sequence belongs to the LipB family.

It is found in the cytoplasm. The catalysed reaction is octanoyl-[ACP] + L-lysyl-[protein] = N(6)-octanoyl-L-lysyl-[protein] + holo-[ACP] + H(+). Its pathway is protein modification; protein lipoylation via endogenous pathway; protein N(6)-(lipoyl)lysine from octanoyl-[acyl-carrier-protein]: step 1/2. Functionally, catalyzes the transfer of endogenously produced octanoic acid from octanoyl-acyl-carrier-protein onto the lipoyl domains of lipoate-dependent enzymes. Lipoyl-ACP can also act as a substrate although octanoyl-ACP is likely to be the physiological substrate. This is Octanoyltransferase from Pseudarthrobacter chlorophenolicus (strain ATCC 700700 / DSM 12829 / CIP 107037 / JCM 12360 / KCTC 9906 / NCIMB 13794 / A6) (Arthrobacter chlorophenolicus).